The chain runs to 437 residues: Protein farnesyltransferase subunit beta (437 aa).

PFTB repeat units lie at residues alanine 123 to glycine 164, arginine 174 to asparagine 215, phenylalanine 222 to lysine 263, leucine 270 to histidine 312, and glutamine 332 to glutamine 374. Residues histidine 248–tyrosine 251 and arginine 291–lysine 294 contribute to the (2E,6E)-farnesyl diphosphate site. Residues aspartate 297 and cysteine 299 each contribute to the Zn(2+) site. Residue tyrosine 300–tryptophan 303 coordinates (2E,6E)-farnesyl diphosphate. Residue histidine 362 coordinates Zn(2+). Position 432 is a phosphoserine (serine 432). Threonine 436 is modified (phosphothreonine).

Belongs to the protein prenyltransferase subunit beta family. As to quaternary structure, heterodimer of FNTA and FNTB. The cofactor is Zn(2+).

The enzyme catalyses L-cysteinyl-[protein] + (2E,6E)-farnesyl diphosphate = S-(2E,6E)-farnesyl-L-cysteinyl-[protein] + diphosphate. Its function is as follows. Essential subunit of the farnesyltransferase complex. Catalyzes the transfer of a farnesyl moiety from farnesyl diphosphate to a cysteine at the fourth position from the C-terminus of several proteins having the C-terminal sequence Cys-aliphatic-aliphatic-X. The polypeptide is Protein farnesyltransferase subunit beta (Fntb) (Mus musculus (Mouse)).